We begin with the raw amino-acid sequence, 27 residues long: Ferric reductase B (27 aa).

Homodimer. The cofactor is FAD.

The catalysed reaction is 2 a Fe(II)-siderophore + NAD(+) + H(+) = 2 a Fe(III)-siderophore + NADH. Reductase activity that acts on Fe(3+)-chelates and uses both NADH and NADPH as electron donors. May play a role in iron uptake. The chain is Ferric reductase B (ferB) from Paracoccus denitrificans.